The following is a 104-amino-acid chain: Large ribosomal subunit protein uL24 (104 aa).

The protein belongs to the universal ribosomal protein uL24 family. Part of the 50S ribosomal subunit.

In terms of biological role, one of two assembly initiator proteins, it binds directly to the 5'-end of the 23S rRNA, where it nucleates assembly of the 50S subunit. Functionally, one of the proteins that surrounds the polypeptide exit tunnel on the outside of the subunit. This is Large ribosomal subunit protein uL24 from Neorickettsia sennetsu (strain ATCC VR-367 / Miyayama) (Ehrlichia sennetsu).